The chain runs to 208 residues: Ribosomal RNA large subunit methyltransferase E (208 aa).

Gly-62, Trp-64, Asp-82, Asp-98, and Asp-123 together coordinate S-adenosyl-L-methionine. Lys-163 (proton acceptor) is an active-site residue.

The protein belongs to the class I-like SAM-binding methyltransferase superfamily. RNA methyltransferase RlmE family.

Its subcellular location is the cytoplasm. It catalyses the reaction uridine(2552) in 23S rRNA + S-adenosyl-L-methionine = 2'-O-methyluridine(2552) in 23S rRNA + S-adenosyl-L-homocysteine + H(+). Functionally, specifically methylates the uridine in position 2552 of 23S rRNA at the 2'-O position of the ribose in the fully assembled 50S ribosomal subunit. This chain is Ribosomal RNA large subunit methyltransferase E, found in Idiomarina loihiensis (strain ATCC BAA-735 / DSM 15497 / L2-TR).